We begin with the raw amino-acid sequence, 69 residues long: DNA-directed RNA polymerase subunit omega (69 aa).

This sequence belongs to the RNA polymerase subunit omega family. In terms of assembly, the RNAP catalytic core consists of 2 alpha, 1 beta, 1 beta' and 1 omega subunit. When a sigma factor is associated with the core the holoenzyme is formed, which can initiate transcription.

It carries out the reaction RNA(n) + a ribonucleoside 5'-triphosphate = RNA(n+1) + diphosphate. In terms of biological role, promotes RNA polymerase assembly. Latches the N- and C-terminal regions of the beta' subunit thereby facilitating its interaction with the beta and alpha subunits. This is DNA-directed RNA polymerase subunit omega from Symbiobacterium thermophilum (strain DSM 24528 / JCM 14929 / IAM 14863 / T).